A 475-amino-acid polypeptide reads, in one-letter code: Putative poly(A) polymerase catalytic subunit (475 aa).

This sequence belongs to the poxviridae poly(A) polymerase catalytic subunit family. Highly divergent.

The protein localises to the virion. The catalysed reaction is RNA(n) + ATP = RNA(n)-3'-adenine ribonucleotide + diphosphate. Its function is as follows. Polymerase that creates the 3'-poly(A) tail of mRNAs. This Ornithodoros (relapsing fever ticks) protein is Putative poly(A) polymerase catalytic subunit.